The sequence spans 307 residues: S-methyl-5'-thioadenosine phosphorylase (307 aa).

Residues Thr20, 62 to 63, and 95 to 96 contribute to the phosphate site; these read RH and SA. Residue Met197 coordinates substrate. Position 198 (Ser198) interacts with phosphate. Residue 221–223 participates in substrate binding; the sequence is DYD.

The protein belongs to the PNP/MTAP phosphorylase family. MTAP subfamily. As to quaternary structure, homotrimer.

The protein localises to the cytoplasm. It localises to the nucleus. It carries out the reaction S-methyl-5'-thioadenosine + phosphate = 5-(methylsulfanyl)-alpha-D-ribose 1-phosphate + adenine. Its pathway is amino-acid biosynthesis; L-methionine biosynthesis via salvage pathway; S-methyl-5-thio-alpha-D-ribose 1-phosphate from S-methyl-5'-thioadenosine (phosphorylase route): step 1/1. Its function is as follows. Catalyzes the reversible phosphorylation of S-methyl-5'-thioadenosine (MTA) to adenine and 5-methylthioribose-1-phosphate. Involved in the breakdown of MTA, a major by-product of polyamine biosynthesis. Responsible for the first step in the methionine salvage pathway after MTA has been generated from S-adenosylmethionine. Has broad substrate specificity with 6-aminopurine nucleosides as preferred substrates. This Fusarium vanettenii (strain ATCC MYA-4622 / CBS 123669 / FGSC 9596 / NRRL 45880 / 77-13-4) (Fusarium solani subsp. pisi) protein is S-methyl-5'-thioadenosine phosphorylase.